Consider the following 298-residue polypeptide: N-acetylmuramic acid 6-phosphate etherase (298 aa).

One can recognise an SIS domain in the interval 55–218 (IHAQVSGGGR…STGLMIKSGK (164 aa)). E83 acts as the Proton donor in catalysis. E114 is a catalytic residue.

The protein belongs to the GCKR-like family. MurNAc-6-P etherase subfamily. As to quaternary structure, homodimer.

The enzyme catalyses N-acetyl-D-muramate 6-phosphate + H2O = N-acetyl-D-glucosamine 6-phosphate + (R)-lactate. It functions in the pathway amino-sugar metabolism; 1,6-anhydro-N-acetylmuramate degradation. The protein operates within amino-sugar metabolism; N-acetylmuramate degradation. Its pathway is cell wall biogenesis; peptidoglycan recycling. In terms of biological role, specifically catalyzes the cleavage of the D-lactyl ether substituent of MurNAc 6-phosphate, producing GlcNAc 6-phosphate and D-lactate. Together with AnmK, is also required for the utilization of anhydro-N-acetylmuramic acid (anhMurNAc) either imported from the medium or derived from its own cell wall murein, and thus plays a role in cell wall recycling. This Shigella boydii serotype 18 (strain CDC 3083-94 / BS512) protein is N-acetylmuramic acid 6-phosphate etherase.